We begin with the raw amino-acid sequence, 159 residues long: MPLKRPELDDPEIRELLEQGMGHNTYGEPFWPNDILIFGVVILGTIFGVIALAVLDPAKMGEPADPFNTPLHILPEWYFYPVFQILRVVPNKLLGVVLMAAIPIGLALVPFIENVNKFQNPFRRPLATAVFLIGTVVTMYLGIGAMIPDIPKSLTLGLF.

3 helical membrane-spanning segments follow: residues 35 to 55 (ILIFGVVILGTIFGVIALAVL), 93 to 113 (LLGVVLMAAIPIGLALVPFIE), and 127 to 147 (ATAVFLIGTVVTMYLGIGAMI).

It belongs to the cytochrome b family. PetD subfamily. As to quaternary structure, the 4 large subunits of the cytochrome b6-f complex are cytochrome b6, subunit IV (17 kDa polypeptide, PetD), cytochrome f and the Rieske protein, while the 4 small subunits are PetG, PetL, PetM and PetN. The complex functions as a dimer.

It is found in the cell inner membrane. Component of the cytochrome b6-f complex, which mediates electron transfer between photosystem II (PSII) and photosystem I (PSI), cyclic electron flow around PSI, and state transitions. The protein is Cytochrome b6-f complex subunit 4 of Gloeobacter violaceus (strain ATCC 29082 / PCC 7421).